A 197-amino-acid chain; its full sequence is dITP/XTP pyrophosphatase (197 aa).

9 to 14 (SNNAGK) is a substrate binding site. The Proton acceptor role is filled by aspartate 70. Aspartate 70 contributes to the Mg(2+) binding site. Substrate-binding positions include serine 71, 153-156 (FGYD), lysine 176, and 181-182 (HR).

This sequence belongs to the HAM1 NTPase family. In terms of assembly, homodimer. The cofactor is Mg(2+).

The enzyme catalyses XTP + H2O = XMP + diphosphate + H(+). The catalysed reaction is dITP + H2O = dIMP + diphosphate + H(+). It carries out the reaction ITP + H2O = IMP + diphosphate + H(+). Its function is as follows. Pyrophosphatase that catalyzes the hydrolysis of nucleoside triphosphates to their monophosphate derivatives, with a high preference for the non-canonical purine nucleotides XTP (xanthosine triphosphate), dITP (deoxyinosine triphosphate) and ITP. Seems to function as a house-cleaning enzyme that removes non-canonical purine nucleotides from the nucleotide pool, thus preventing their incorporation into DNA/RNA and avoiding chromosomal lesions. This is dITP/XTP pyrophosphatase from Chromobacterium violaceum (strain ATCC 12472 / DSM 30191 / JCM 1249 / CCUG 213 / NBRC 12614 / NCIMB 9131 / NCTC 9757 / MK).